The following is a 483-amino-acid chain: Phloretin 2'-O-glucosyltransferase (483 aa).

His-15 serves as the catalytic Proton acceptor. His-15 is a binding site for an anthocyanidin. The Charge relay role is filled by Asp-118. Positions 140, 360, 362, 377, 380, 381, 382, and 385 each coordinate UDP-alpha-D-glucose. Ala-400 lines the an anthocyanidin pocket. UDP-alpha-D-glucose-binding residues include Glu-401 and Gln-402.

This sequence belongs to the UDP-glycosyltransferase family. Highly expressed in roots and at lower levels in leaves, flowers and fruits.

The enzyme catalyses phloretin + UDP-alpha-D-glucose = phlorizin + UDP + H(+). Functionally, glycosyltransferase that possesses phloretin 2'-O-glycosyltransferase activity. Converts phloretin to phlorizin (phloretin 2'-O-glucoside), a potent antioxidant. Is specific for phloretin and does not possess glycosyltransferase activity toward caffeic acid, catechin, chlorogenic acid, 2-coumaric acid, 3-coumaric acid, 4-coumaric acid, cyanidin, 3,4-dihydroxyhydrocinnamic acid, epicatechin, 3-hydroxybenzoic acid, naringenin, 3,4-dihydroxybenzoic acid, quercetin and rutin. Can glycosylate phloretin in the presence of UDP-glucose, UDP-xylose and UDP-galactose. This is Phloretin 2'-O-glucosyltransferase from Malus domestica (Apple).